An 83-amino-acid chain; its full sequence is Small ribosomal subunit protein uS17 (83 aa).

Belongs to the universal ribosomal protein uS17 family. As to quaternary structure, part of the 30S ribosomal subunit.

In terms of biological role, one of the primary rRNA binding proteins, it binds specifically to the 5'-end of 16S ribosomal RNA. This chain is Small ribosomal subunit protein uS17, found in Francisella tularensis subsp. holarctica (strain FTNF002-00 / FTA).